The primary structure comprises 187 residues: Protein lethal(2)essential for life (187 aa).

A sHSP domain is found at 61 to 170 (NSLQKQESGS…TERLVQITQT (110 aa)). The tract at residues 151–187 (APMKALPPPQTERLVQITQTGPSSKEDNAKKVETSTA) is disordered. Residues 174 to 187 (SKEDNAKKVETSTA) show a composition bias toward basic and acidic residues.

The protein belongs to the small heat shock protein (HSP20) family. As to expression, ubiquitously expressed during embryogenesis with no sign of tissue specificity in expression up to stage 16.

Vital role in embryonic development. The protein is Protein lethal(2)essential for life (l(2)efl) of Drosophila melanogaster (Fruit fly).